The sequence spans 345 residues: S-adenosylmethionine:tRNA ribosyltransferase-isomerase (345 aa).

It belongs to the QueA family. Monomer.

It is found in the cytoplasm. It catalyses the reaction 7-aminomethyl-7-carbaguanosine(34) in tRNA + S-adenosyl-L-methionine = epoxyqueuosine(34) in tRNA + adenine + L-methionine + 2 H(+). It functions in the pathway tRNA modification; tRNA-queuosine biosynthesis. Transfers and isomerizes the ribose moiety from AdoMet to the 7-aminomethyl group of 7-deazaguanine (preQ1-tRNA) to give epoxyqueuosine (oQ-tRNA). The sequence is that of S-adenosylmethionine:tRNA ribosyltransferase-isomerase from Thermodesulfovibrio yellowstonii (strain ATCC 51303 / DSM 11347 / YP87).